We begin with the raw amino-acid sequence, 87 residues long: UPF0248 protein TSIB_1445 (87 aa).

This sequence belongs to the UPF0248 family.

The polypeptide is UPF0248 protein TSIB_1445 (Thermococcus sibiricus (strain DSM 12597 / MM 739)).